Consider the following 97-residue polypeptide: MALKATALFAMLGLSFVLSPSIEANVDPHFDKFMESGIRHVYMLFENKSVESSEQFYSFMRTTYKNDPCSSDFECIERGAEMAQSYARIMNIKLETE.

Positions 1 to 24 (MALKATALFAMLGLSFVLSPSIEA) are cleaved as a signal peptide. Cysteine 69 and cysteine 75 are joined by a disulfide.

Belongs to the T4likevirus antiholin family. In terms of assembly, homotetramer; in free-form. Homomultimer. Heterotetramer composed of 2 holin and 2 antiholin. The holin-antiholin complex binds dsDNA. Interacts (via C-terminus) with holin (via C-terminus); this interaction blocks the holin homomultimerization and delays the host cell lysis. Disulfide bond is required for functionality.

It localises to the host periplasm. Functionally, involved in lysis inhibition. Senses superinfections and inhibits the holin, thereby delaying the host cell lysis timing. The genomic DNA from the superinfecting phage bound to the complex holin-antiholin probably serves as a signal for the lysis inhibition and blocks the holin multimerization. The sequence is that of Antiholin (rI) from Enterobacteria phage T4 (Bacteriophage T4).